The chain runs to 302 residues: Small ribosomal subunit biogenesis GTPase RsgA (302 aa).

A CP-type G domain is found at 75 to 233 (KNELIRPAVS…IMDTPGFSSM (159 aa)). GTP contacts are provided by residues 124–127 (NKKD) and 175–183 (GPSGVGKSS). Zn(2+) contacts are provided by C257, C262, H264, and C270.

The protein belongs to the TRAFAC class YlqF/YawG GTPase family. RsgA subfamily. Monomer. Associates with 30S ribosomal subunit, binds 16S rRNA. The cofactor is Zn(2+).

It localises to the cytoplasm. Its function is as follows. One of several proteins that assist in the late maturation steps of the functional core of the 30S ribosomal subunit. Helps release RbfA from mature subunits. May play a role in the assembly of ribosomal proteins into the subunit. Circularly permuted GTPase that catalyzes slow GTP hydrolysis, GTPase activity is stimulated by the 30S ribosomal subunit. The sequence is that of Small ribosomal subunit biogenesis GTPase RsgA from Agathobacter rectalis (strain ATCC 33656 / DSM 3377 / JCM 17463 / KCTC 5835 / VPI 0990) (Eubacterium rectale).